A 974-amino-acid chain; its full sequence is Collagen alpha-1(I) chain (974 aa).

Positions 1–14 (GISVPGPMGPSGPR) are enriched in low complexity. Residues 1-974 (GISVPGPMGP…PGPPGPPGPP (974 aa)) are disordered. 10 positions are modified to 4-hydroxyproline: proline 17, proline 20, proline 23, proline 32, proline 35, proline 38, proline 53, proline 68, proline 75, and proline 81. Positions 25–44 (PQGFQGPPGEPGEPGASGPM) are enriched in low complexity. A compositionally biased stretch (basic and acidic residues) spans 56–73 (NGDDGEAGKPGRPGERRG). Lysine 84 bears the 5-hydroxylysine; alternate mark. Lysine 84 is a glycosylation site (O-linked (Gal...) hydroxylysine; alternate). Serine 90 carries the post-translational modification Phosphoserine. Positions 98–114 (DAGPAGPKGEPGSPGEN) are enriched in low complexity. A 4-hydroxyproline mark is found at proline 108, proline 111, proline 117, proline 126, proline 132, proline 153, proline 162, proline 165, proline 192, proline 195, proline 207, proline 213, proline 222, proline 228, proline 231, and proline 245. A compositionally biased stretch (low complexity) spans 132-150 (PGASGPAGARGNDGATGAA). Residues 152–164 (PPGPTGPAGPPGF) show a composition bias toward pro residues. A compositionally biased stretch (low complexity) spans 198-228 (AGAAGPAGNPGADGQPGAKGANGAPGIAGAP). Lysine 248 carries the 5-hydroxylysine modification. A 4-hydroxyproline mark is found at proline 254, proline 257, proline 269, proline 278, proline 293, proline 299, proline 308, and proline 314. Over residues 303–312 (GERGGPGSRG) the composition is skewed to gly residues. Lysine 323 bears the 5-hydroxylysine mark. 24 positions are modified to 4-hydroxyproline: proline 328, proline 337, proline 343, proline 349, proline 358, proline 361, proline 370, proline 379, proline 385, proline 397, proline 406, proline 415, proline 418, proline 436, proline 454, proline 460, proline 466, proline 472, proline 484, proline 493, proline 505, proline 520, proline 527, and proline 536. Residues 352-378 (KGLTGSPGSPGPDGKTGPPGPAGQDGR) are compositionally biased toward low complexity. Residues 387–406 (ARGQAGVMGFPGPKGAAGEP) are compositionally biased toward low complexity. The segment covering 504 to 517 (APGNDGAKGDAGAP) has biased composition (low complexity). Residue lysine 548 is modified to 5-hydroxylysine. Proline 554, proline 569, and proline 575 each carry 4-hydroxyproline. The segment covering 581–595 (SGPSGPAGPTGARGA) has biased composition (low complexity). Serine 584 is modified (phosphoserine). 4-hydroxyproline occurs at positions 596, 602, 605, 614, 620, 638, 647, and 656. The span at 608–635 (AGFAGPPGADGQPGAKGEPGDAGAKGDA) shows a compositional bias: low complexity. Pro residues predominate over residues 637 to 649 (PPGPAGPTGPPGP). Lysine 659 carries the post-translational modification 5-hydroxylysine. A compositionally biased stretch (low complexity) spans 664–680 (SAGPPGATGFPGAAGRV). Proline 668 and proline 674 each carry 4-hydroxyproline. Proline 682 bears the 3-hydroxyproline mark. Residues proline 683, proline 692, proline 695, proline 716, proline 725, proline 733, proline 742, proline 760, proline 769, proline 772, proline 778, proline 793, proline 799, proline 805, proline 814, and proline 820 each carry the 4-hydroxyproline modification. Low complexity predominate over residues 709–718 (ETGPAGRPGE). Over residues 730–742 (KGSPGADGPAGAP) the composition is skewed to low complexity. Pro residues predominate over residues 792-802 (PPGPVGPPGLA). Residues 804 to 826 (PPGESGREGSPGAEGSPGRDGSP) show a composition bias toward low complexity. Pro residues predominate over residues 828–844 (PKGPPGAPGAPGAPGPV). 5-hydroxylysine is present on lysine 829. 4-hydroxyproline is present on residues proline 832, proline 835, and proline 838. Over residues 865–879 (AGPAGARGPAGPQGP) the composition is skewed to low complexity. Residues 880–894 (RGDKGETGEQGDRRG) are compositionally biased toward basic and acidic residues. Lysine 883 is modified (5-hydroxylysine). 4 positions are modified to 4-hydroxyproline: proline 905, proline 908, proline 926, and proline 941. The segment covering 908–941 (PGEQGPSGASGPAGPRGPPGSAGSPGKDGLNGLP) has biased composition (low complexity). Proline 946 bears the 3-hydroxyproline mark. The residue at position 947 (proline 947) is a 4-hydroxyproline. The segment covering 959 to 974 (VGPPGPPGPPGPPGPP) has biased composition (pro residues). Position 961 is a 3-hydroxyproline (proline 961). A 4-hydroxyproline modification is found at proline 962. Proline 964 carries the post-translational modification 3-hydroxyproline. Proline 965 is subject to 4-hydroxyproline. Proline 967 bears the 3-hydroxyproline mark. A 4-hydroxyproline mark is found at proline 968, proline 971, and proline 974.

This sequence belongs to the fibrillar collagen family. In terms of assembly, trimers of one alpha 2(I) and two alpha 1(I) chains. Post-translationally, contains mostly 4-hydroxyproline. Proline residues at the third position of the tripeptide repeating unit (G-X-Y) are hydroxylated in some or all of the chains. In terms of processing, contains 3-hydroxyproline at a few sites. This modification occurs on the first proline residue in the sequence motif Gly-Pro-Hyp, where Hyp is 4-hydroxyproline. Lysine residues at the third position of the tripeptide repeating unit (G-X-Y) are 5-hydroxylated in some or all of the chains. Post-translationally, O-glycosylated on hydroxylated lysine residues. The O-linked glycan consists of a Glc-Gal disaccharide. As to expression, expressed in bones.

It is found in the secreted. Its subcellular location is the extracellular space. The protein localises to the extracellular matrix. Type I collagen is a member of group I collagen (fibrillar forming collagen). This is Collagen alpha-1(I) chain from Scelidodon sp. (strain SLP-2019) (South American ground sloth).